Reading from the N-terminus, the 268-residue chain is Resolvase (268 aa).

The Tyr recombinase domain maps to 47–250; it reads ELPKYLLAPE…FALDVAARHR (204 aa). Active-site residues include arginine 82, lysine 114, histidine 202, arginine 205, and histidine 228. Tyrosine 237 functions as the O-(3'-phospho-DNA)-tyrosine intermediate in the catalytic mechanism.

This sequence belongs to the 'phage' integrase family.

Acts as a repressor of transcription and as a site-specific resolvase that cleaves at the RfsF site. In Escherichia coli (strain K12), this protein is Resolvase (resD).